Consider the following 277-residue polypeptide: Putative phosphoenolpyruvate synthase regulatory protein (277 aa).

Residue 156–163 coordinates ADP; the sequence is GVSRAGKT.

Belongs to the pyruvate, phosphate/water dikinase regulatory protein family. PSRP subfamily.

The enzyme catalyses [pyruvate, water dikinase] + ADP = [pyruvate, water dikinase]-phosphate + AMP + H(+). The catalysed reaction is [pyruvate, water dikinase]-phosphate + phosphate + H(+) = [pyruvate, water dikinase] + diphosphate. In terms of biological role, bifunctional serine/threonine kinase and phosphorylase involved in the regulation of the phosphoenolpyruvate synthase (PEPS) by catalyzing its phosphorylation/dephosphorylation. The chain is Putative phosphoenolpyruvate synthase regulatory protein from Deinococcus radiodurans (strain ATCC 13939 / DSM 20539 / JCM 16871 / CCUG 27074 / LMG 4051 / NBRC 15346 / NCIMB 9279 / VKM B-1422 / R1).